The following is a 434-amino-acid chain: MSAETAAANTATAPVPEVQEQESSKSKQVNLTPAPLPTSSPWKLAPTEIPVSTISIEDLDATRKKKNRTPTPKSSTATKWVPIKASITVSGTKRSGSKNGASNGNSNKSKNNKTAASSTSSSNANRKKKHHQHNAKKQQQMKKDGFESAVGEEDSKDATSQENGQSTQQQQPPHHRNHHHSHHHNSNGPQRRKFHNSNNAGMPQNQGFPPQFKPYQGRNARNNNNNRSKYHNHFHHNQQHPQQPMVKLQQQFYPVQPVLMAINNIARQIEYYFSEENLTVDNYLRSKLSKDGFAPLSLISKFYRVVNMSFGGDTNLILAALREIVANEAATVNVAEGTLAAKEGDNVTGEAKEPSPLDKYFVRSKSWSNWLPETFETEINIEKELVGDALDQFMISLPPVPQQEEESSTELASQEQETKEDSAPVAAGESESSL.

A compositionally biased stretch (low complexity) spans 1–13 (MSAETAAANTATA). The tract at residues 1–243 (MSAETAAANT…FHHNQQHPQQ (243 aa)) is disordered. A compositionally biased stretch (polar residues) spans 26–41 (SKQVNLTPAPLPTSSP). Ser-55 carries the phosphoserine modification. Residues 93–124 (KRSGSKNGASNGNSNKSKNNKTAASSTSSSNA) show a composition bias toward low complexity. The span at 125–140 (NRKKKHHQHNAKKQQQ) shows a compositional bias: basic residues. Residue Ser-148 is modified to Phosphoserine. Lys-156 participates in a covalent cross-link: Glycyl lysine isopeptide (Lys-Gly) (interchain with G-Cter in ubiquitin). Residues 158 to 167 (ATSQENGQST) show a composition bias toward polar residues. Over residues 173 to 195 (PHHRNHHHSHHHNSNGPQRRKFH) the composition is skewed to basic residues. A compositionally biased stretch (polar residues) spans 196–208 (NSNNAGMPQNQGF). Over residues 218-227 (RNARNNNNNR) the composition is skewed to low complexity. Residues 228–238 (SKYHNHFHHNQ) are compositionally biased toward basic residues. The region spanning 255-351 (VQPVLMAINN…KEGDNVTGEA (97 aa)) is the HTH La-type RNA-binding domain. Glycyl lysine isopeptide (Lys-Gly) (interchain with G-Cter in ubiquitin) cross-links involve residues Lys-301, Lys-342, and Lys-352. The disordered stretch occupies residues 396-434 (SLPPVPQQEEESSTELASQEQETKEDSAPVAAGESESSL). Phosphoserine is present on Ser-422.

As to quaternary structure, interacts with HAP1. Component of the HMC including HAP1, SRO9 and YDJ1.

Its subcellular location is the cytoplasm. In terms of biological role, may overlap in function with tropomyosin and may be involved in organization of actin filaments. Acts as a multicopy suppressor of RHO3 mutation. RNA-binding protein which may modulate mRNA translation. Involved in heme regulation of HAP1, as a component of the high-molecular-weight complex (HMC). The sequence is that of RNA-binding protein SRO9 (SRO9) from Saccharomyces cerevisiae (strain ATCC 204508 / S288c) (Baker's yeast).